The following is a 221-amino-acid chain: Probable septum site-determining protein MinC (221 aa).

This sequence belongs to the MinC family. In terms of assembly, interacts with MinD and FtsZ.

In terms of biological role, cell division inhibitor that blocks the formation of polar Z ring septums. Rapidly oscillates between the poles of the cell to destabilize FtsZ filaments that have formed before they mature into polar Z rings. Prevents FtsZ polymerization. The sequence is that of Probable septum site-determining protein MinC from Shewanella frigidimarina (strain NCIMB 400).